Reading from the N-terminus, the 83-residue chain is NAD(P)H-quinone oxidoreductase subunit L (83 aa).

The next 2 helical transmembrane spans lie at 18–38 and 53–73; these read IGGYVALGGLYLVVMPLLLFF and FSVYGLVFFFFPGMIVFAPFL.

Belongs to the complex I NdhL subunit family. NDH-1 can be composed of about 15 different subunits; different subcomplexes with different compositions have been identified which probably have different functions.

Its subcellular location is the cellular thylakoid membrane. It carries out the reaction a plastoquinone + NADH + (n+1) H(+)(in) = a plastoquinol + NAD(+) + n H(+)(out). The enzyme catalyses a plastoquinone + NADPH + (n+1) H(+)(in) = a plastoquinol + NADP(+) + n H(+)(out). In terms of biological role, NDH-1 shuttles electrons from an unknown electron donor, via FMN and iron-sulfur (Fe-S) centers, to quinones in the respiratory and/or the photosynthetic chain. The immediate electron acceptor for the enzyme in this species is believed to be plastoquinone. Couples the redox reaction to proton translocation, and thus conserves the redox energy in a proton gradient. Cyanobacterial NDH-1 also plays a role in inorganic carbon-concentration. The protein is NAD(P)H-quinone oxidoreductase subunit L of Synechococcus sp. (strain CC9311).